A 1048-amino-acid chain; its full sequence is Integrin alpha-V (1048 aa).

The signal sequence occupies residues 1-30 (MAFPPRRRLRLGPRGLPLLLSGLLLPLCRA). Residues 31–992 (FNLDVESPAE…WGIQPAPMPV (962 aa)) are Extracellular-facing. FG-GAP repeat units follow at residues 32–98 (NLDV…RRCQ), 109–170 (DYAK…VEYA), 173–225 (RSKN…VSKY), 237–291 (QLAT…GKNM), 292–357 (SSLH…GDFQ), 358–415 (TIKL…GLNA), and 419–482 (QILE…VYPS). Residue Asn-74 is glycosylated (N-linked (GlcNAc...) asparagine). 3 disulfides stabilise this stretch: Cys-89/Cys-97, Cys-138/Cys-158, and Cys-172/Cys-185. Ca(2+) contacts are provided by Asp-260, Asn-262, Asp-264, Ile-266, and Asp-268. N-linked (GlcNAc...) asparagine glycosylation is found at Asn-290 and Asn-296. Ca(2+) contacts are provided by Asp-314, Asn-316, Asp-318, Tyr-320, Asp-322, Asp-379, Asp-381, Asp-383, Phe-385, Asp-387, Asp-443, Asp-445, Asn-447, Tyr-449, and Asp-451. Asn-488 carries N-linked (GlcNAc...) asparagine glycosylation. Intrachain disulfides connect Cys-491-Cys-502 and Cys-508-Cys-565. Asn-554 and Asn-615 each carry an N-linked (GlcNAc...) asparagine glycan. Intrachain disulfides connect Cys-626–Cys-632 and Cys-698–Cys-711. Residues Asn-704, Asn-835, Asn-851, and Asn-874 are each glycosylated (N-linked (GlcNAc...) asparagine). 2 disulfide bridges follow: Cys-852/Cys-914 and Cys-904/Cys-909. N-linked (GlcNAc...) asparagine glycosylation is found at Asn-945, Asn-973, and Asn-980. Residues 993 to 1016 (PVWVIILAVLAGLLLLAVLVFVMY) traverse the membrane as a helical segment. The Cytoplasmic portion of the chain corresponds to 1017 to 1048 (RMGFFKRVRPPQEEQEREQLQPHENGEGNSET). Positions 1019–1023 (GFFKR) match the GFFKR motif motif. Residues 1027–1042 (PQEEQEREQLQPHENG) are compositionally biased toward basic and acidic residues. The tract at residues 1027–1048 (PQEEQEREQLQPHENGEGNSET) is disordered.

It belongs to the integrin alpha chain family. In terms of assembly, heterodimer of an alpha and a beta subunit. The alpha subunit is composed of a heavy and a light chain linked by a disulfide bond. Alpha-V (ITGAV) associates with either beta-1 (ITGB1), beta-3 (ITGB3), beta-5 (ITGB5), beta-6 (ITGB6) or beta-8 (ITGB8). Interacts with RAB25. Interacts with CIB1. Integrins ITGAV:ITGB3 and ITGAV:ITGB5 interact with FBLN5 (via N-terminus). ITGAV:ITGB3 and ITGAV:ITGB5 interact with CCN3. ITGAV:ITGB3 interacts with ADGRA2. ITGAV:ITGB3 interacts with FGF2; it is likely that FGF2 can simultaneously bind ITGAV:ITGB3 and FGF receptors. ITGAV:ITGB3 interacts with SELP (via C-type lectin domain); the interaction mediates cell-cell interaction and adhesion. ITGAV:ITGB3 is found in a ternary complex with CX3CR1 and CX3CL1. ITGAV:ITGB3 is found in a ternary complex with NRG1 and ERBB3. ITGAV:ITGB3 is found in a ternary complex with FGF1 and FGFR1. ITGAV:ITGB3 is found in a ternary complex with IGF1 and IGF1R. ITGAV:ITGB3 interacts with IGF2. ITGAV:ITGB3 and ITGAV:ITGB6 interact with FBN1. ITGAV:ITGB3 interacts with CD9, CD81 and CD151 (via second extracellular domain). ITGAV:ITGB6 interacts with TGFB1. ITGAV:ITGB3 interacts with PTN. Forms a complex with PTPRZ1 and PTN that stimulates endothelial cell migration through ITGB3 'Tyr-773' phosphorylation. Interacts with TM4SF19. As to quaternary structure, (Microbial infection) Alpha-V/beta-6 and alpha-V/beta-3 bind to foot-and-mouth disease virus (FMDV) VP1 protein and acts as a receptor for this virus.

The protein localises to the cell membrane. Its subcellular location is the cell junction. It localises to the focal adhesion. Its function is as follows. The alpha-V (ITGAV) integrins are receptors for vitronectin, cytotactin, fibronectin, fibrinogen, laminin, matrix metalloproteinase-2, osteopontin, osteomodulin, prothrombin, thrombospondin, TGFB1 and vWF. They recognize the sequence R-G-D in a wide array of ligands. Alpha-V integrins may play a role in embryo implantation, angiogenesis and wound healing. ITGAV:ITGB3 binds to fractalkine (CX3CL1) and may act as its coreceptor in CX3CR1-dependent fractalkine signaling. ITGAV:ITGB3 binds to NRG1 (via EGF domain) and this binding is essential for NRG1-ERBB signaling. ITGAV:ITGB3 binds to FGF1 and this binding is essential for FGF1 signaling. ITGAV:ITGB3 binds to FGF2 and this binding is essential for FGF2 signaling. ITGAV:ITGB3 binds to IGF1 and this binding is essential for IGF1 signaling. ITGAV:ITGB3 binds to IGF2 and this binding is essential for IGF2 signaling. ITGAV:ITGB3 binds to IL1B and this binding is essential for IL1B signaling. ITGAV:ITGB3 binds to PLA2G2A via a site (site 2) which is distinct from the classical ligand-binding site (site 1) and this induces integrin conformational changes and enhanced ligand binding to site 1. ITGAV:ITGB3 and ITGAV:ITGB6 act as receptors for fibrillin-1 (FBN1) and mediate R-G-D-dependent cell adhesion to FBN1. Integrin alpha-V/beta-6 or alpha-V/beta-8 (ITGAV:ITGB6 or ITGAV:ITGB8) mediates R-G-D-dependent release of transforming growth factor beta-1 (TGF-beta-1) from regulatory Latency-associated peptide (LAP), thereby playing a key role in TGF-beta-1 activation. ITGAV:ITGB3 acts as a receptor for CD40LG. ITGAV:ITGB3 acts as a receptor for IBSP and promotes cell adhesion and migration to IBSP. The protein is Integrin alpha-V (ITGAV) of Bos taurus (Bovine).